A 389-amino-acid chain; its full sequence is Chalcone synthase 9 (389 aa).

C164 is an active-site residue.

Belongs to the thiolase-like superfamily. Chalcone/stilbene synthases family.

The enzyme catalyses (E)-4-coumaroyl-CoA + 3 malonyl-CoA + 3 H(+) = 2',4,4',6'-tetrahydroxychalcone + 3 CO2 + 4 CoA. It functions in the pathway secondary metabolite biosynthesis; flavonoid biosynthesis. In terms of biological role, the primary product of this enzyme is 4,2',4',6'-tetrahydroxychalcone (also termed naringenin-chalcone or chalcone) which can under specific conditions spontaneously isomerize into naringenin. This Medicago sativa (Alfalfa) protein is Chalcone synthase 9 (CHS9).